The sequence spans 340 residues: Phosphate acyltransferase (340 aa).

The protein belongs to the PlsX family. In terms of assembly, homodimer. Probably interacts with PlsY.

The protein localises to the cytoplasm. The enzyme catalyses a fatty acyl-[ACP] + phosphate = an acyl phosphate + holo-[ACP]. Its pathway is lipid metabolism; phospholipid metabolism. In terms of biological role, catalyzes the reversible formation of acyl-phosphate (acyl-PO(4)) from acyl-[acyl-carrier-protein] (acyl-ACP). This enzyme utilizes acyl-ACP as fatty acyl donor, but not acyl-CoA. This chain is Phosphate acyltransferase, found in Marinobacter nauticus (strain ATCC 700491 / DSM 11845 / VT8) (Marinobacter aquaeolei).